Consider the following 378-residue polypeptide: Cytochrome b (378 aa).

Transmembrane regions (helical) follow at residues 34–54 (FGSL…FLAM), 78–99 (WLLR…YLHV), 114–134 (WLIG…GYVL), and 179–199 (FFTF…IHLL). Positions 84 and 98 each coordinate heme b. Positions 183 and 197 each coordinate heme b. Histidine 202 contacts a ubiquinone. A run of 4 helical transmembrane segments spans residues 227–247 (FKDI…VLIS), 289–309 (LGGV…PFYN), 321–341 (INQV…WIGA), and 348–368 (YVLI…VNPL).

It belongs to the cytochrome b family. In terms of assembly, the main subunits of complex b-c1 are: cytochrome b, cytochrome c1 and the Rieske protein. Requires heme b as cofactor.

The protein localises to the mitochondrion inner membrane. Its function is as follows. Component of the ubiquinol-cytochrome c reductase complex (complex III or cytochrome b-c1 complex) that is part of the mitochondrial respiratory chain. The b-c1 complex mediates electron transfer from ubiquinol to cytochrome c. Contributes to the generation of a proton gradient across the mitochondrial membrane that is then used for ATP synthesis. In Drosophila simulans (Fruit fly), this protein is Cytochrome b (mt:Cyt-b).